We begin with the raw amino-acid sequence, 668 residues long: DNA ligase (668 aa).

NAD(+)-binding positions include aspartate 34–aspartate 38, serine 83–leucine 84, and glutamate 114. The active-site N6-AMP-lysine intermediate is lysine 116. Arginine 137, glutamate 171, lysine 286, and lysine 310 together coordinate NAD(+). Zn(2+) is bound by residues cysteine 404, cysteine 407, cysteine 422, and cysteine 427. Residues asparagine 588 to glycine 668 form the BRCT domain.

This sequence belongs to the NAD-dependent DNA ligase family. LigA subfamily. Mg(2+) is required as a cofactor. The cofactor is Mn(2+).

The enzyme catalyses NAD(+) + (deoxyribonucleotide)n-3'-hydroxyl + 5'-phospho-(deoxyribonucleotide)m = (deoxyribonucleotide)n+m + AMP + beta-nicotinamide D-nucleotide.. In terms of biological role, DNA ligase that catalyzes the formation of phosphodiester linkages between 5'-phosphoryl and 3'-hydroxyl groups in double-stranded DNA using NAD as a coenzyme and as the energy source for the reaction. It is essential for DNA replication and repair of damaged DNA. The chain is DNA ligase from Mycoplasma mycoides subsp. mycoides SC (strain CCUG 32753 / NCTC 10114 / PG1).